A 131-amino-acid chain; its full sequence is Glycine cleavage system H protein (131 aa).

A Lipoyl-binding domain is found at 24–106 (RVTVGISDHA…YGEGWMFVVE (83 aa)). At Lys65 the chain carries N6-lipoyllysine.

This sequence belongs to the GcvH family. In terms of assembly, the glycine cleavage system is composed of four proteins: P, T, L and H. It depends on (R)-lipoate as a cofactor.

In terms of biological role, the glycine cleavage system catalyzes the degradation of glycine. The H protein shuttles the methylamine group of glycine from the P protein to the T protein. The chain is Glycine cleavage system H protein from Stenotrophomonas maltophilia (strain K279a).